The primary structure comprises 634 residues: Chaperone protein HtpG (634 aa).

Positions 1–342 are a; substrate-binding; that stretch reads MSVETQKETL…SNDLSLNVSR (342 aa). The segment at 343–559 is b; it reads EILQKDPIID…EQDLGLQMRQ (217 aa). Positions 560 to 634 are c; the sequence is ILEASGQKVP…LNKLLVELSV (75 aa).

The protein belongs to the heat shock protein 90 family. In terms of assembly, homodimer.

It localises to the cytoplasm. Functionally, molecular chaperone. Has ATPase activity. The chain is Chaperone protein HtpG from Pseudomonas fluorescens (strain ATCC BAA-477 / NRRL B-23932 / Pf-5).